A 317-amino-acid chain; its full sequence is Eukaryotic translation initiation factor 2 subunit 2 (317 aa).

The segment at 1–146 is disordered; it reads MSATEEENVL…KEKTITTSDG (146 aa). A compositionally biased stretch (basic and acidic residues) spans 79-90; sequence AIEKLENEGAHD. Over residues 109-125 the composition is skewed to low complexity; it reads KSSTTTTTSTTTTTTEP. The C4-type zinc finger occupies 222-246; the sequence is HVYNYVFAELGTNGSIDGNQRLVIR.

It belongs to the eIF-2-beta/eIF-5 family. Eukaryotic translation initiation factor 2 eIF2 is a heterotrimeric complex composed of an alpha, a beta and a gamma subunit.

The protein localises to the cytoplasm. It is found in the cytosol. Its function is as follows. Component of the eIF2 complex that functions in the early steps of protein synthesis by forming a ternary complex with GTP and initiator tRNA. This complex binds to a 40S ribosomal subunit, followed by mRNA binding to form a 43S pre-initiation complex (43S PIC). Junction of the 60S ribosomal subunit to form the 80S initiation complex is preceded by hydrolysis of the GTP bound to eIF2 and release of an eIF2-GDP binary complex. In order for eIF2 to recycle and catalyze another round of initiation, the GDP bound to eIF2 must exchange with GTP by way of a reaction catalyzed by eIF2B. The sequence is that of Eukaryotic translation initiation factor 2 subunit 2 (eif2s2) from Dictyostelium discoideum (Social amoeba).